Reading from the N-terminus, the 119-residue chain is Large ribosomal subunit protein uL22 (119 aa).

It belongs to the universal ribosomal protein uL22 family. In terms of assembly, part of the 50S ribosomal subunit.

Functionally, this protein binds specifically to 23S rRNA; its binding is stimulated by other ribosomal proteins, e.g. L4, L17, and L20. It is important during the early stages of 50S assembly. It makes multiple contacts with different domains of the 23S rRNA in the assembled 50S subunit and ribosome. The globular domain of the protein is located near the polypeptide exit tunnel on the outside of the subunit, while an extended beta-hairpin is found that lines the wall of the exit tunnel in the center of the 70S ribosome. The polypeptide is Large ribosomal subunit protein uL22 (Chlorobaculum tepidum (strain ATCC 49652 / DSM 12025 / NBRC 103806 / TLS) (Chlorobium tepidum)).